Reading from the N-terminus, the 170-residue chain is ATP synthase subunit b (170 aa).

The helical transmembrane segment at 22–41 (ILNWAVVVFGLYKFLPGFLG) threads the bilayer. A disordered region spans residues 72–98 (AKKDLSSAEEKASQIKADSLKRSESIR).

Belongs to the ATPase B chain family. In terms of assembly, F-type ATPases have 2 components, F(1) - the catalytic core - and F(0) - the membrane proton channel. F(1) has five subunits: alpha(3), beta(3), gamma(1), delta(1), epsilon(1). F(0) has four main subunits: a(1), b(1), b'(1) and c(10-14). The alpha and beta chains form an alternating ring which encloses part of the gamma chain. F(1) is attached to F(0) by a central stalk formed by the gamma and epsilon chains, while a peripheral stalk is formed by the delta, b and b' chains.

The protein resides in the cellular thylakoid membrane. Its function is as follows. F(1)F(0) ATP synthase produces ATP from ADP in the presence of a proton or sodium gradient. F-type ATPases consist of two structural domains, F(1) containing the extramembraneous catalytic core and F(0) containing the membrane proton channel, linked together by a central stalk and a peripheral stalk. During catalysis, ATP synthesis in the catalytic domain of F(1) is coupled via a rotary mechanism of the central stalk subunits to proton translocation. Functionally, component of the F(0) channel, it forms part of the peripheral stalk, linking F(1) to F(0). This chain is ATP synthase subunit b, found in Prochlorococcus marinus (strain MIT 9301).